The following is a 533-amino-acid chain: DEAD-box ATP-dependent RNA helicase CshA (533 aa).

The Q motif signature appears at 2–30; it reads TTFRELGLSDSLLQSVESMGFEEATPIQA. The Helicase ATP-binding domain occupies 33–203; the sequence is IPHALQGKDI…ERFMTEPQHI (171 aa). ATP is bound at residue 46 to 53; that stretch reads AQTGTGKT. The short motif at 151 to 154 is the DEAD box element; it reads DEAD. Residues 214–374 enclose the Helicase C-terminal domain; that stretch reads NIQQFYLEVQ…RMDAPTLDEA (161 aa). Residues 428-533 form a disordered region; sequence TTPIALTSEP…ERKHHSRPQA (106 aa). A compositionally biased stretch (basic and acidic residues) spans 458-512; that stretch reads DGNRNRSRDGRGGGDGRNRDRNRDGRNRDGNRDRNRDGNRDRNRDGGSRGRRGEG. Residues 524–533 show a composition bias toward basic residues; sequence ERKHHSRPQA.

This sequence belongs to the DEAD box helicase family. CshA subfamily. Oligomerizes, may be a member of the RNA degradosome.

The protein localises to the cytoplasm. The enzyme catalyses ATP + H2O = ADP + phosphate + H(+). In terms of biological role, DEAD-box RNA helicase possibly involved in RNA degradation. May work in conjunction with the cold shock proteins to ensure proper initiation of transcription at low and optimal temperatures. Unwinds dsRNA in both 5'- and 3'-directions and shows RNA-dependent ATPase activity. Probably has a somewhat redundant function with cshB, as cshA can partially complement the growth effects of a cshB deletion. Plays a role in adaptation to cold, oxididant and pH stress. The protein is DEAD-box ATP-dependent RNA helicase CshA of Bacillus cereus (strain ATCC 14579 / DSM 31 / CCUG 7414 / JCM 2152 / NBRC 15305 / NCIMB 9373 / NCTC 2599 / NRRL B-3711).